A 139-amino-acid chain; its full sequence is Small ribosomal subunit protein bS6 (139 aa).

The disordered stretch occupies residues 119-139 (LKGASKVETPTGPESTDIQEK). The span at 130-139 (GPESTDIQEK) shows a compositional bias: polar residues.

This sequence belongs to the bacterial ribosomal protein bS6 family.

Its function is as follows. Binds together with bS18 to 16S ribosomal RNA. The protein is Small ribosomal subunit protein bS6 of Borreliella burgdorferi (strain ZS7) (Borrelia burgdorferi).